Here is a 356-residue protein sequence, read N- to C-terminus: Tyrosine recombinase XerS (356 aa).

The Core-binding (CB) domain maps to 16-121; that stretch reads LMPWYVLEYY…ALSSLYKYLT (106 aa). Residues 169-354 enclose the Tyr recombinase domain; sequence EFLEYVDCEY…VNDEQKNALD (186 aa). Catalysis depends on residues arginine 210, lysine 234, histidine 306, arginine 309, and histidine 332. The active-site O-(3'-phospho-DNA)-tyrosine intermediate is the tyrosine 341.

This sequence belongs to the 'phage' integrase family. XerS subfamily.

It localises to the cytoplasm. Its activity is regulated as follows. FtsK is required for recombination. Functionally, site-specific tyrosine recombinase, which acts by catalyzing the cutting and rejoining of the recombining DNA molecules. Essential to convert dimers of the bacterial chromosome into monomers to permit their segregation at cell division. In Streptococcus mutans serotype c (strain ATCC 700610 / UA159), this protein is Tyrosine recombinase XerS.